Reading from the N-terminus, the 392-residue chain is Early estrogen-induced gene 1 protein (392 aa).

Residues 2 to 145 (AFLMKKKKFK…ILKVTIGMFL (144 aa)) enclose the C2 NT-type domain. The required for interaction with TNFRSF11A/RANK stretch occupies residues 129-138 (NTRQDNSILK). Residues 173–324 (LTCKGGGTSS…RKKDSVESHP (152 aa)) are disordered. A compositionally biased stretch (low complexity) spans 183 to 194 (GGSSSTNSLTGS). The span at 228–255 (SRNSSYASQQSKLSGYSTEHSRSSSLSD) shows a compositional bias: polar residues. The segment covering 262-273 (TSTSSSASGGLS) has biased composition (low complexity). Basic and acidic residues-rich tracts occupy residues 281-300 (GMER…EKPP) and 307-324 (HLSD…ESHP).

The protein belongs to the EEIG family. Part of a complex composed of EEIG1, TNFRSF11A/RANK, PLCG2, GAB2, TEC and BTK; complex formation increases in the presence of TNFSF11/RANKL. Interacts with PRDM1/BLIMP1; following TNFSF11/RANKL stimulation in bone marrow-derived macrophages, the interaction promotes the binding of PRDM1/BLIMP1 to the gene promoter of IRF8. Interacts (via N-terminus) with TNFRSF11A/RANK (via cytoplasmic domain); when in the presence of TNFSF11/RANKL. Expressed during TNFSF11/RANKL-induced differentiation of bone marrow-derived macrophages to osteoclasts.

The protein resides in the nucleus. Its subcellular location is the cytoplasm. It localises to the membrane raft. Its function is as follows. Key component of TNFSF11/RANKL- and TNF-induced osteoclastogenesis pathways, thereby mediates bone resorption in pathological bone loss conditions. Required for TNFSF11/RANKL-induced osteoclastogenesis via its interaction with TNFRSF11A/RANK, thereby facilitates the downsteam transcription of NFATC1 and activation of PLCG2. Facilitates recruitment of the transcriptional repressor PRDM1/BLIMP1 to the promoter of the anti-osteoclastogenesis gene IRF8, thereby resulting in transcription of osteoclast differentiation factors. May play a role in estrogen action. The protein is Early estrogen-induced gene 1 protein (Eeig1) of Mus musculus (Mouse).